The chain runs to 311 residues: Aspartate carbamoyltransferase catalytic subunit (311 aa).

Arg59 and Thr60 together coordinate carbamoyl phosphate. Lys87 serves as a coordination point for L-aspartate. Positions 109, 139, and 142 each coordinate carbamoyl phosphate. 2 residues coordinate L-aspartate: Arg172 and Arg224. The carbamoyl phosphate site is built by Ala265 and Pro266.

This sequence belongs to the aspartate/ornithine carbamoyltransferase superfamily. ATCase family. Heterododecamer (2C3:3R2) of six catalytic PyrB chains organized as two trimers (C3), and six regulatory PyrI chains organized as three dimers (R2).

It catalyses the reaction carbamoyl phosphate + L-aspartate = N-carbamoyl-L-aspartate + phosphate + H(+). It participates in pyrimidine metabolism; UMP biosynthesis via de novo pathway; (S)-dihydroorotate from bicarbonate: step 2/3. In terms of biological role, catalyzes the condensation of carbamoyl phosphate and aspartate to form carbamoyl aspartate and inorganic phosphate, the committed step in the de novo pyrimidine nucleotide biosynthesis pathway. This is Aspartate carbamoyltransferase catalytic subunit from Streptococcus pyogenes serotype M1.